The chain runs to 506 residues: Cysteine protease 1 (506 aa).

The disordered stretch occupies residues 1–21 (MTSSRPSGRDSTGWQETVSNT). The Nucleophile role is filled by Cys226. Active-site residues include Asp399 and His401.

The protein belongs to the peptidase C54 family.

It localises to the cytoplasm. The protein localises to the nucleus. It is found in the preautophagosomal structure. The enzyme catalyses [protein]-C-terminal L-amino acid-glycyl-phosphatidylethanolamide + H2O = [protein]-C-terminal L-amino acid-glycine + a 1,2-diacyl-sn-glycero-3-phosphoethanolamine. Functionally, cysteine protease that plays a key role in cytoplasm to vacuole transport (Cvt) and autophagy by mediating both proteolytic activation and delipidation of ATG8. Required for selective autophagic degradation of the nucleus (nucleophagy) as well as for mitophagy which contributes to regulate mitochondrial quantity and quality by eliminating the mitochondria to a basal level to fulfill cellular energy requirements and preventing excess ROS production. The protease activity is required for proteolytic activation of ATG8: cleaves the C-terminal amino acid of ATG8 to reveal a C-terminal glycine. ATG8 ubiquitin-like activity requires the exposure of the glycine at the C-terminus for its conjugation to phosphatidylethanolamine (PE) and its insertion to membranes, which is necessary for autophagy. The ATG8-PE conjugate mediates tethering between adjacent membranes and stimulates membrane hemifusion, leading to expansion of the autophagosomal membrane during autophagy. In addition to the protease activity, also catalyzes deconjugation of PE-conjugated forms of ATG8 during macroautophagy: ATG8 delipidation is required to release the protein from membranes, which facilitates multiple events during macroautophagy, and especially for efficient autophagosome biogenesis, the assembly of ATG9-containing tubulovesicular clusters into phagophores/autophagosomes, and for the disassembly of PAS-associated ATG components. ATG8 delipidation by ATG4 also recycles ATG8-PE generated on inappropriate membranes to maintain a reservoir of unlipidated ATG8 that is required for autophagosome formation at the PAS. This is Cysteine protease 1 (cpr-1) from Neurospora crassa (strain ATCC 24698 / 74-OR23-1A / CBS 708.71 / DSM 1257 / FGSC 987).